A 642-amino-acid chain; its full sequence is Capsid vertex component 2 (642 aa).

The segment at 1–48 (MSLLHTFWRLPVAVFFEPHEENVLRCPERVLRRLLEDAAVTMRGGGWR) is interaction with major capsid protein/MCP. Residues 97-125 (DEGPSPRTLLQPPCRPRSSSPGTGVAGAS) are disordered.

The protein belongs to the herpesviridae CVC2 protein family. As to quaternary structure, heterodimerizes with CVC1. Interacts with major capsid protein/MCP and triplex capsid protein 1/TRX1 at the pentamer vertices. Interacts with the large tegument protein/LTP.

It is found in the virion. The protein resides in the host nucleus. Functionally, capsid vertex-specific component that plays a role during viral DNA encapsidation, assuring correct genome cleavage and presumably stabilizing capsids that contain full-length viral genomes. Participates in the interaction between the capsid and the tegument through interaction with the large tegument protein/LTP. This chain is Capsid vertex component 2, found in Homo sapiens (Human).